The primary structure comprises 688 residues: Methionine--tRNA ligase (688 aa).

The short motif at 13–23 (PYANGPIHIGH) is the 'HIGH' region element. Residues cysteine 144, cysteine 147, cysteine 157, and cysteine 160 each contribute to the Zn(2+) site. Residues 334-338 (KMSKS) carry the 'KMSKS' region motif. Lysine 337 serves as a coordination point for ATP. The tRNA-binding domain maps to 582–688 (DFAKIDLRVA…AGAVPGMRVR (107 aa)).

It belongs to the class-I aminoacyl-tRNA synthetase family. MetG type 1 subfamily. Homodimer. The cofactor is Zn(2+).

It localises to the cytoplasm. The enzyme catalyses tRNA(Met) + L-methionine + ATP = L-methionyl-tRNA(Met) + AMP + diphosphate. Functionally, is required not only for elongation of protein synthesis but also for the initiation of all mRNA translation through initiator tRNA(fMet) aminoacylation. The sequence is that of Methionine--tRNA ligase from Ralstonia nicotianae (strain ATCC BAA-1114 / GMI1000) (Ralstonia solanacearum).